Consider the following 769-residue polypeptide: Neprilysin-21 (769 aa).

Residues 1–26 (MKPENGAATWHPAKRSCLGRLTTLET) lie on the Cytoplasmic side of the membrane. Residues 27 to 47 (LLLVFLGLLITALLSVLFLWL) form a helical; Signal-anchor for type II membrane protein membrane-spanning segment. Residues 48-769 (WVLDGYKTFT…MNPERKCQVW (722 aa)) lie on the Extracellular side of the membrane. A glycan (N-linked (GlcNAc...) asparagine) is linked at N69. One can recognise a Peptidase M13 domain in the interval 85-769 (VCTSRECVRL…MNPERKCQVW (685 aa)). 5 disulfides stabilise this stretch: C86–C91, C109–C754, C117–C714, C173–C428, and C638–C766. N221, N240, N272, N307, N356, N412, and N506 each carry an N-linked (GlcNAc...) asparagine glycan. Residue H601 coordinates Zn(2+). The active site involves E602. Positions 605 and 663 each coordinate Zn(2+). D667 functions as the Proton donor in the catalytic mechanism. N684 and N698 each carry an N-linked (GlcNAc...) asparagine glycan.

The protein belongs to the peptidase M13 family. Zn(2+) serves as cofactor.

The protein localises to the cell membrane. Probable cell surface protease. The polypeptide is Neprilysin-21 (nep-21) (Caenorhabditis elegans).